We begin with the raw amino-acid sequence, 500 residues long: Lysine--tRNA ligase (500 aa).

Mg(2+)-binding residues include Glu410 and Glu417.

This sequence belongs to the class-II aminoacyl-tRNA synthetase family. As to quaternary structure, homodimer. Mg(2+) is required as a cofactor.

Its subcellular location is the cytoplasm. The catalysed reaction is tRNA(Lys) + L-lysine + ATP = L-lysyl-tRNA(Lys) + AMP + diphosphate. This Shewanella putrefaciens (strain CN-32 / ATCC BAA-453) protein is Lysine--tRNA ligase.